Here is a 274-residue protein sequence, read N- to C-terminus: Thiamine kinase (274 aa).

Belongs to the thiamine kinase family.

It carries out the reaction thiamine + ATP = thiamine phosphate + ADP + H(+). It participates in cofactor biosynthesis; thiamine diphosphate biosynthesis; thiamine phosphate from thiamine: step 1/1. Functionally, catalyzes the ATP-dependent phosphorylation of thiamine to thiamine phosphate. Is involved in thiamine salvage. The protein is Thiamine kinase of Escherichia coli O45:K1 (strain S88 / ExPEC).